Here is a 358-residue protein sequence, read N- to C-terminus: scyllo-inositol 2-dehydrogenase (NADP(+)) IolW (358 aa).

The protein belongs to the Gfo/Idh/MocA family.

The enzyme catalyses scyllo-inositol + NADP(+) = scyllo-inosose + NADPH + H(+). Catalyzes the reversible NADPH-dependent reduction of scyllo-inosose (SIS) to scyllo-inositol (SI). Cannot use NADH instead of NADPH. May be involved in reduction of not only SIS but also various oxidized compounds manifested upon stressful conditions. The sequence is that of scyllo-inositol 2-dehydrogenase (NADP(+)) IolW from Bacillus subtilis (strain 168).